We begin with the raw amino-acid sequence, 345 residues long: Transcription factor MYB106 (345 aa).

2 HTH myb-type domains span residues 9 to 61 (KAGL…TNYL) and 62 to 116 (RPDI…KKRL). 2 DNA-binding regions (H-T-H motif) span residues 37–61 (WRSLPEKAGLQRCGKSCRLRWTNYL) and 89–112 (WSAIATHLPKRTDNEIKNYWNTHL).

Expressed in trichomes, stems, carpels, petals and stamens.

The protein resides in the nucleus. Its function is as follows. Functions as a repressor of epidermal cell outgrowth and negatively regulate trichome branch formation. Acts both as a positive and a negative regulator of cellular outgrowth. Promotes both trichome expansion and branch formation. Coordinately with WIN1/SHN1, participates in the regulation of cuticle biosynthesis and wax accumulation in reproductive organs and trichomes. Functions in cuticle nanoridge formation in petals and stamens, and in morphogenesis of petal conical cells and trichomes. May play a role in the regulation of cuticle formation in vegetative organs. This is Transcription factor MYB106 from Arabidopsis thaliana (Mouse-ear cress).